The chain runs to 764 residues: Thyrotropin receptor (764 aa).

Residues 1–21 form the signal peptide; the sequence is MRPTPLLRLALLLVLPSSLWG. Residues 22 to 413 lie on the Extracellular side of the membrane; sequence ERCPSPPCEC…EFNPCEDIMG (392 aa). Cys-31 and Cys-41 are joined by a disulfide. An LRR 1 repeat occupies 51–74; sequence PPSTQTLKFIETHLKTIPSRAFSN. N-linked (GlcNAc...) asparagine glycans are attached at residues Asn-77 and Asn-99. 5 LRR repeats span residues 125–150, 152–174, 176–199, 201–223, and 225–248; these read LPLLKFLGIFNTGLRVFPDLTKIYST, VFFILEITDNPYMTSVPANAFQG, SNETLTLKLYNNGFTSIQGHAFNG, KLDAVYLNKNKYLTVIDQDAFAG, and YSGPTLLDISYTSVTALPSKGLEH. 2 N-linked (GlcNAc...) asparagine glycosylation sites follow: Asn-177 and Asn-198. A glycan (N-linked (GlcNAc...) asparagine) is linked at Asn-302. Residue Tyr-385 is modified to Sulfotyrosine. Residues 414-441 traverse the membrane as a helical segment; it reads YKFLRIVVWFVSLLALLGNVFVLVILLT. At 442 to 450 the chain is on the cytoplasmic side; sequence SHYKLTVPR. Residues 451-473 form a helical membrane-spanning segment; it reads FLMCNLAFADFCMGLYLLLIASV. At 474-494 the chain is on the extracellular side; the sequence is DLYTQSEYYNHAIDWQTGPGC. A disulfide bond links Cys-494 and Cys-569. A helical membrane pass occupies residues 495 to 517; that stretch reads NTAGFFTVFASELSVYTLTVITL. Topologically, residues 518 to 537 are cytoplasmic; the sequence is ERWYAITFAMHLDRKIRLWH. Residues 538-560 traverse the membrane as a helical segment; the sequence is AYVIMLGGWVCCFLLALLPLVGI. The Extracellular portion of the chain corresponds to 561 to 580; the sequence is SSYAKVSICLPMDTETPLAL. Residues 581 to 602 form a helical membrane-spanning segment; that stretch reads AYIILVLLLNIIAFIIVCACYV. At 603-625 the chain is on the cytoplasmic side; the sequence is KIYITVRNPHYNPGDKDTRIAKR. Residues 626–649 form a helical membrane-spanning segment; it reads MAVLIFTDFMCMAPISFYALSALM. The Extracellular portion of the chain corresponds to 650-660; it reads NKPLITVTNSK. Residues 661–682 form a helical membrane-spanning segment; the sequence is ILLVLFYPLNSCANPFLYAIFT. Over 683-764 the chain is Cytoplasmic; the sequence is KAFQRDVFML…TSKEYKQTVL (82 aa). The PDZ-binding signature appears at 762 to 764; sequence TVL.

Belongs to the G-protein coupled receptor 1 family. FSH/LSH/TSH subfamily. As to quaternary structure, interacts with heterodimer GPHA2:GPHB5; this interaction stimulates cAMP production. Interacts (via the PDZ-binding motif) with SCRIB; regulates TSHR trafficking and function. Post-translationally, glycosylated. Sulfated. Sulfation on Tyr-385 plays a role in thyrotropin receptor binding and activation.

It localises to the cell membrane. The protein resides in the basolateral cell membrane. In terms of biological role, receptor for the thyroid-stimulating hormone (TSH) or thyrotropin. Also acts as a receptor for the heterodimeric glycoprotein hormone (GPHA2:GPHB5) or thyrostimulin. The activity of this receptor is mediated by G proteins which activate adenylate cyclase. Plays a central role in controlling thyroid cell metabolism. This chain is Thyrotropin receptor (TSHR), found in Ovis aries (Sheep).